Reading from the N-terminus, the 181-residue chain is ATP synthase subunit b, chloroplastic (181 aa).

The helical transmembrane segment at 31–50 (NVLNIAILLSGVVYLGRNFL) threads the bilayer.

Belongs to the ATPase B chain family. As to quaternary structure, F-type ATPases have 2 components, F(1) - the catalytic core - and F(0) - the membrane proton channel. F(1) has five subunits: alpha(3), beta(3), gamma(1), delta(1), epsilon(1). F(0) has four main subunits: a(1), b(1), b'(1) and c(10-14). The alpha and beta chains form an alternating ring which encloses part of the gamma chain. F(1) is attached to F(0) by a central stalk formed by the gamma and epsilon chains, while a peripheral stalk is formed by the delta, b and b' chains.

It localises to the plastid. The protein localises to the chloroplast thylakoid membrane. Its function is as follows. F(1)F(0) ATP synthase produces ATP from ADP in the presence of a proton or sodium gradient. F-type ATPases consist of two structural domains, F(1) containing the extramembraneous catalytic core and F(0) containing the membrane proton channel, linked together by a central stalk and a peripheral stalk. During catalysis, ATP synthesis in the catalytic domain of F(1) is coupled via a rotary mechanism of the central stalk subunits to proton translocation. Functionally, component of the F(0) channel, it forms part of the peripheral stalk, linking F(1) to F(0). This is ATP synthase subunit b, chloroplastic from Rhodomonas salina (Cryptomonas salina).